A 312-amino-acid chain; its full sequence is Tetraacyldisaccharide 4'-kinase (312 aa).

An ATP-binding site is contributed by 60 to 67; it reads IAGGSGKT.

This sequence belongs to the LpxK family.

The catalysed reaction is a lipid A disaccharide + ATP = a lipid IVA + ADP + H(+). Its pathway is glycolipid biosynthesis; lipid IV(A) biosynthesis; lipid IV(A) from (3R)-3-hydroxytetradecanoyl-[acyl-carrier-protein] and UDP-N-acetyl-alpha-D-glucosamine: step 6/6. Functionally, transfers the gamma-phosphate of ATP to the 4'-position of a tetraacyldisaccharide 1-phosphate intermediate (termed DS-1-P) to form tetraacyldisaccharide 1,4'-bis-phosphate (lipid IVA). The protein is Tetraacyldisaccharide 4'-kinase of Helicobacter pylori (strain J99 / ATCC 700824) (Campylobacter pylori J99).